Consider the following 898-residue polypeptide: Coiled-coil domain-containing protein 186 (898 aa).

Disordered stretches follow at residues M1–K43, N68–N95, and R702–A749. An N-acetylserine modification is found at S2. The segment covering K82–N95 has biased composition (polar residues). Residues K201–S712 are a coiled coil. Residues R703–V717 are compositionally biased toward basic and acidic residues. The segment covering S718–S734 has biased composition (low complexity). Phosphoserine is present on S740. Coiled coils occupy residues A759–Y803 and K855–R894.

This chain is Coiled-coil domain-containing protein 186 (CCDC186), found in Homo sapiens (Human).